The following is a 370-amino-acid chain: Peptidyl-prolyl cis-trans isomerase D (370 aa).

Ser5 bears the Phosphoserine mark. One can recognise a PPIase cyclophilin-type domain in the interval 19–183 (FFDVDIGGER…KLCVIAECGE (165 aa)). Lys171 is subject to N6-acetyllysine. The tract at residues 185-215 (KEGDEWGIFPKDGSGDSHPDFPEDADIDLKD) is chaperone activity. Ser198 carries the post-translational modification Phosphoserine. An interaction with HSP90AB1 region spans residues 214 to 370 (KDVDKILLIS…EKAVYAKMFA (157 aa)). TPR repeat units lie at residues 223 to 256 (SEDLKNIGNTFFKSQNWEMAIKKYAKVLRYLDSS), 273 to 306 (LSCVLNIGACKLKMSNWQGAIDSCLEALEMDPSN), and 308 to 340 (KALYRKAQGWQGLKEYDQALADLKKAQEIAPGD).

Belongs to the cyclophilin-type PPIase family. PPIase D subfamily. In terms of assembly, identified in ESR1 or NR3C1/GCR steroid receptor-chaperone complexes. Found in HSP90 chaperone complexes with kinase clients LCK or EIF2AK1. Two monomers associate with one HSP90 homodimer. Interacts with HSP90AA1. Interacts with HSP90AB1; PPID and FKBP4 compete for binding to HSP90AB1 and the interaction is mutually exclusive with the PPID:HSPA8 interaction. Interacts with HSPA8; PPID and STIP1 but not FKBP4 compete for binding to HSPA8 and the interaction is mutually exclusive with the PPID:HSP90AB1 interaction. Interacts with S100A1 and S100A2; the interactions dissociate the PPID:HSP90AA1 interaction. Interacts with S100A6. Interacts with MYB, ILF2, XRCC6, RACK1 and RPS3. Interacts with cytoplasmic dynein 1 intermediate chain (DYNC1I1 or DYNC1I2).

It localises to the cytoplasm. The protein resides in the nucleus. The protein localises to the nucleolus. Its subcellular location is the nucleoplasm. It carries out the reaction [protein]-peptidylproline (omega=180) = [protein]-peptidylproline (omega=0). Its activity is regulated as follows. Less sensitive to inhibition by cyclosporin A than is CYP-18. Functionally, PPIase that catalyzes the cis-trans isomerization of proline imidic peptide bonds in oligopeptides and may therefore assist protein folding. Proposed to act as a co-chaperone in HSP90 complexes such as in unligated steroid receptors heterocomplexes. Different co-chaperones seem to compete for association with HSP90 thus establishing distinct HSP90-co-chaperone-receptor complexes with the potential to exert tissue-specific receptor activity control. May have a preference for estrogen receptor complexes and is not found in glucocorticoid receptor complexes. May be involved in cytoplasmic dynein-dependent movement of the receptor from the cytoplasm to the nucleus. May regulate MYB by inhibiting its DNA-binding activity. Involved in regulation of AHR signaling by promoting the formation of the AHR:ARNT dimer; the function is independent of HSP90 but requires the chaperone activity region. Involved in regulation of UV radiation-induced apoptosis. The chain is Peptidyl-prolyl cis-trans isomerase D from Rattus norvegicus (Rat).